The following is a 175-amino-acid chain: Putative carbonic anhydrase-like protein YbcF (175 aa).

Belongs to the beta-class carbonic anhydrase family.

The polypeptide is Putative carbonic anhydrase-like protein YbcF (ybcF) (Bacillus subtilis (strain 168)).